Reading from the N-terminus, the 333-residue chain is Methylosome protein WDR77 (333 aa).

WD repeat units follow at residues 16–59 (CMEV…GAPN), 68–106 (QTEA…SLLV), 113–152 (EHDD…VLKS), 155–195 (AHSS…PATR), 199–240 (CASD…SAQT), 243–283 (VHSQ…VFRD), and 285–328 (SHRD…NLIA).

In terms of assembly, heterotetramer; dimer of heterodimer with prmt5. Interacts with histone h2a and h4 and with nucleoplasmin. As to expression, detected in egg (at protein level).

Its subcellular location is the cytoplasm. The protein localises to the nucleus. Its function is as follows. Non-catalytic component of the 20S prmt5-containing methyltransferase complex, which modifies specific arginines to dimethylarginines in several spliceosomal Sm proteins and histones. Required for normal prmt5 methyltransferase activity. The sequence is that of Methylosome protein WDR77 from Xenopus laevis (African clawed frog).